A 92-amino-acid chain; its full sequence is C-C motif chemokine 3 (92 aa).

The N-terminal stretch at 1–23 is a signal peptide; the sequence is MQVSTAALAVLLCTMALCNQFSA. Disulfide bonds link C33/C57 and C34/C73.

This sequence belongs to the intercrine beta (chemokine CC) family. Self-associates. Also heterodimer of MIP-1-alpha(4-69) and MIP-1-beta(3-69). Interacts with CCR1. Post-translationally, N-terminal processed form LD78-alpha(4-69) is produced by proteolytic cleavage after secretion from HTLV1-transformed T-cells.

It localises to the secreted. Monokine with inflammatory and chemokinetic properties. Binds to CCR1, CCR4 and CCR5. One of the major HIV-suppressive factors produced by CD8+ T-cells. Recombinant MIP-1-alpha induces a dose-dependent inhibition of different strains of HIV-1, HIV-2, and simian immunodeficiency virus (SIV). The polypeptide is C-C motif chemokine 3 (CCL3) (Homo sapiens (Human)).